A 614-amino-acid chain; its full sequence is MSRSAAASGGPRRPDQHLPPAPCGASGPPETFRTESDGAGTMNKLRQSLRRRKPAYVPEASRPHQWQADEDAVRKGTCSFPVRYLGHVEVEESRGMHVCEDAVKKLKAMGRKSVKSVLWVSADGLRVVDDKTKDLLVDQTIEKVSFCAPDRNLDKAFSYICRDGTTRRWICHCFLALKDSGERLSHAVGCAFAACLERKQRREKECGVTAAFDASRTSFAREGSFRLSGGGRPAEREAGDKKKAEAAAAPAVAPGPAQPGHVSPTPATTSPGEKGEAGTPVAAGTTAAAIPRRHAPLEQLVRQGSFRGFPALSQKNSPFKRQLSLRLNELPSTLQRRTDFQVKGTVPEMEPPGTGDSDGISALCTQISSSFASAGAPVPGPPSATTGTSAWGEPSVPAATAFQPGHKRTPSEAERWLEEVSQVAKAQQQQQQQQQQQQQQQQQQQQQQQQQATSVPPMPTMAPTLQPFSTPVGPFDTAAAQVAVFLPPTHMQPPFVPAYPGLGYPPMPRVPVVGITPSQMVANAFCSAAQLQPQPATLLGKAGAFPPPTAPSAPGGQARPRPNGAPWPPEPAPAPAPELDPFEAQWAALEGKPAVEKPSNPFSGDLQKTFEIEL.

Disordered regions lie at residues 1-68 (MSRS…QWQA), 223-283 (GSFR…PVAA), 371-420 (FASA…LEEV), 448-468 (QQQQ…LQPF), and 539-614 (LGKA…EIEL). Residues 74–223 (RKGTCSFPVR…ASRTSFAREG (150 aa)) form the PID domain. S224 and S228 each carry phosphoserine. Over residues 233–245 (PAEREAGDKKKAE) the composition is skewed to basic and acidic residues. Low complexity predominate over residues 246–260 (AAAAPAVAPGPAQPG). S263 is modified (phosphoserine). Residue T279 is modified to Phosphothreonine. The span at 371 to 390 (FASAGAPVPGPPSATTGTSA) shows a compositional bias: low complexity. The span at 409–418 (TPSEAERWLE) shows a compositional bias: basic and acidic residues. Position 411 is a phosphoserine (S411). The segment covering 563-578 (NGAPWPPEPAPAPAPE) has biased composition (pro residues).

In terms of assembly, associates with EPS15 and NOTCH1. Interacts (via PTB domain) with MAP3K7IP2 (via C-terminal). Interacts (via C-terminal) with TRAF6 (via TRAF domains).

It localises to the cytoplasm. Plays a role in the process of neurogenesis. Required throughout embryonic neurogenesis to maintain neural progenitor cells, also called radial glial cells (RGCs), by allowing their daughter cells to choose progenitor over neuronal cell fate. Not required for the proliferation of neural progenitor cells before the onset of embryonic neurogenesis. Also required postnatally in the subventricular zone (SVZ) neurogenesis by regulating SVZ neuroblasts survival and ependymal wall integrity. Negative regulator of NF-kappa-B signaling pathway. The inhibition of NF-kappa-B activation is mediated at least in part, by preventing MAP3K7IP2 to interact with polyubiquitin chains of TRAF6 and RIPK1 and by stimulating the 'Lys-48'-linked polyubiquitination and degradation of TRAF6 in cortical neurons. The chain is Numb-like protein (Numbl) from Rattus norvegicus (Rat).